Reading from the N-terminus, the 120-residue chain is Cytochrome c-550 (120 aa).

A helical membrane pass occupies residues 5 to 25 (PLIPFLLIAVLGIGLTFFLSV). The Periplasmic portion of the chain corresponds to 26–120 (KGLDDSREIA…DMAEWVSKIK (95 aa)). The heme c site is built by cysteine 60, cysteine 63, histidine 64, and methionine 99.

In terms of processing, binds 1 heme c group covalently per subunit.

The protein localises to the cell membrane. Not essential for growth on minimal or rich media. The sequence is that of Cytochrome c-550 (cccA) from Bacillus subtilis (strain 168).